The following is a 184-amino-acid chain: NADH-quinone oxidoreductase subunit B (184 aa).

Residues Cys37, Cys38, Cys103, and Cys132 each coordinate [4Fe-4S] cluster.

Belongs to the complex I 20 kDa subunit family. NDH-1 is composed of 14 different subunits. Subunits NuoB, C, D, E, F, and G constitute the peripheral sector of the complex. Requires [4Fe-4S] cluster as cofactor.

Its subcellular location is the cell membrane. The catalysed reaction is a quinone + NADH + 5 H(+)(in) = a quinol + NAD(+) + 4 H(+)(out). In terms of biological role, NDH-1 shuttles electrons from NADH, via FMN and iron-sulfur (Fe-S) centers, to quinones in the respiratory chain. The immediate electron acceptor for the enzyme in this species is believed to be a menaquinone. Couples the redox reaction to proton translocation (for every two electrons transferred, four hydrogen ions are translocated across the cytoplasmic membrane), and thus conserves the redox energy in a proton gradient. This Rhodococcus erythropolis (strain PR4 / NBRC 100887) protein is NADH-quinone oxidoreductase subunit B.